A 179-amino-acid polypeptide reads, in one-letter code: uncharacterized protein (179 aa).

The signal sequence occupies residues 1–26; that stretch reads MKKNMILFFGILKKLLICILKMEIKC.

This is an uncharacterized protein from Acheta domesticus (House cricket).